Here is a 429-residue protein sequence, read N- to C-terminus: Glutamate-1-semialdehyde 2,1-aminomutase 2 (429 aa).

Position 267 is an N6-(pyridoxal phosphate)lysine (K267).

Belongs to the class-III pyridoxal-phosphate-dependent aminotransferase family. HemL subfamily. Homodimer. Requires pyridoxal 5'-phosphate as cofactor.

Its subcellular location is the cytoplasm. The catalysed reaction is (S)-4-amino-5-oxopentanoate = 5-aminolevulinate. The protein operates within porphyrin-containing compound metabolism; protoporphyrin-IX biosynthesis; 5-aminolevulinate from L-glutamyl-tRNA(Glu): step 2/2. In Brevibacillus brevis (strain 47 / JCM 6285 / NBRC 100599), this protein is Glutamate-1-semialdehyde 2,1-aminomutase 2.